A 377-amino-acid polypeptide reads, in one-letter code: Glutamate 5-kinase (377 aa).

Residue K22 coordinates ATP. Substrate contacts are provided by S62, D149, and N161. Residues 181–182 (TD) and 223–229 (TGGMVTK) contribute to the ATP site. One can recognise a PUA domain in the interval 285 to 363 (RGVLVADSGA…AQLRRLLGEE (79 aa)).

This sequence belongs to the glutamate 5-kinase family.

It is found in the cytoplasm. It carries out the reaction L-glutamate + ATP = L-glutamyl 5-phosphate + ADP. The protein operates within amino-acid biosynthesis; L-proline biosynthesis; L-glutamate 5-semialdehyde from L-glutamate: step 1/2. In terms of biological role, catalyzes the transfer of a phosphate group to glutamate to form L-glutamate 5-phosphate. This chain is Glutamate 5-kinase, found in Bifidobacterium animalis subsp. lactis (strain AD011).